Here is a 296-residue protein sequence, read N- to C-terminus: Glycine--tRNA ligase alpha subunit (296 aa).

Belongs to the class-II aminoacyl-tRNA synthetase family. Tetramer of two alpha and two beta subunits.

The protein localises to the cytoplasm. It catalyses the reaction tRNA(Gly) + glycine + ATP = glycyl-tRNA(Gly) + AMP + diphosphate. The sequence is that of Glycine--tRNA ligase alpha subunit from Francisella tularensis subsp. novicida (strain U112).